A 100-amino-acid chain; its full sequence is Urease subunit gamma (100 aa).

The protein belongs to the urease gamma subunit family. As to quaternary structure, heterotrimer of UreA (gamma), UreB (beta) and UreC (alpha) subunits. Three heterotrimers associate to form the active enzyme.

The protein resides in the cytoplasm. The enzyme catalyses urea + 2 H2O + H(+) = hydrogencarbonate + 2 NH4(+). The protein operates within nitrogen metabolism; urea degradation; CO(2) and NH(3) from urea (urease route): step 1/1. This is Urease subunit gamma from Burkholderia cenocepacia (strain ATCC BAA-245 / DSM 16553 / LMG 16656 / NCTC 13227 / J2315 / CF5610) (Burkholderia cepacia (strain J2315)).